Consider the following 1755-residue polypeptide: E3 ubiquitin-protein ligase UBR2 (1755 aa).

Alanine 2 bears the N-acetylalanine mark. Residue lysine 94 forms a Glycyl lysine isopeptide (Lys-Gly) (interchain with G-Cter in ubiquitin) linkage. Residues 97-168 form a UBR-type zinc finger; it reads HLCGRVFKVG…EGPYCQKHKL (72 aa). Zn(2+) is bound by residues cysteine 99, cysteine 112, cysteine 115, cysteine 124, cysteine 127, histidine 133, and histidine 136. Phenylalanine 148 is a binding site for a peptide. Cysteine 149 serves as a coordination point for Zn(2+). Aspartate 150 provides a ligand contact to a peptide. Cysteine 151 provides a ligand contact to Zn(2+). Aspartate 153 is an a peptide binding site. A Glycyl lysine isopeptide (Lys-Gly) (interchain with G-Cter in ubiquitin) cross-link involves residue lysine 158. Cysteine 163 lines the Zn(2+) pocket. Residue lysine 165 forms a Glycyl lysine isopeptide (Lys-Gly) (interchain with G-Cter in ubiquitin) linkage. Histidine 166 serves as a coordination point for Zn(2+). Residues lysine 248, lysine 255, and lysine 470 each participate in a glycyl lysine isopeptide (Lys-Gly) (interchain with G-Cter in ubiquitin) cross-link. Phosphoserine is present on serine 476. Residues lysine 488, lysine 568, lysine 779, and lysine 789 each participate in a glycyl lysine isopeptide (Lys-Gly) (interchain with G-Cter in ubiquitin) cross-link. Positions 1012–1033 are disordered; the sequence is AEAEGTIMEESSRDKDKAERKR. Residues 1019-1054 are a coiled coil; it reads MEESSRDKDKAERKRKAEIARLRREKIMAQMSEMQR. Basic and acidic residues predominate over residues 1021–1033; that stretch reads ESSRDKDKAERKR. 8 residues coordinate Zn(2+): cysteine 1108, cysteine 1111, cysteine 1168, histidine 1170, histidine 1173, cysteine 1176, cysteine 1210, and cysteine 1213. The segment at 1108–1214 adopts an RING-type; atypical zinc-finger fold; it reads CILCQEEQEV…NGEFLCPLCE (107 aa). Glycyl lysine isopeptide (Lys-Gly) (interchain with G-Cter in ubiquitin) cross-links involve residues lysine 1496, lysine 1599, and lysine 1689. Serine 1694 bears the Phosphoserine mark. At tyrosine 1697 the chain carries Phosphotyrosine.

The protein belongs to the E3 ubiquitin-protein ligase UBR1-like family. Interacts with UBE2B; promotes the UBE2B-H2A interaction and the ubiquitination of histone H2A by UBE2B and UBR2. Interacts with RECQL4. Interacts with Tex19.1 and Tex19.2; does not lead to Tex19.1 degradation and stabilizes it. Interacts with L1RE1. Interacts with CASP8. Interacts with ATXN3. Interacts with UBE2O. Post-translationally, dephosphorylated by DUSP22 at Ser-1694 and Tyr-1697, leading to subsequent ubiquitination and proteasomal degradation. 'Lys-48'-linked ubiquitinated at Lys-94, Lys-779 and Lys-1599 following DUSP22-mediated dephosphorylation of Ser-1694 and Tyr-1697 which promotes UBR2 interaction with the SCF(FBW1A) E3 ubiquitin-protein ligase complex. As to expression, highly expressed in skeletal muscle. Also expressed in heart, kidney and testis. Expressed in acinar cells of the pancreas. In testes, expressed primarily in spermatocytes. Expressed in cerebellum.

Its subcellular location is the nucleus. The protein localises to the chromosome. The catalysed reaction is S-ubiquitinyl-[E2 ubiquitin-conjugating enzyme]-L-cysteine + [acceptor protein]-L-lysine = [E2 ubiquitin-conjugating enzyme]-L-cysteine + N(6)-ubiquitinyl-[acceptor protein]-L-lysine.. It participates in protein modification; protein ubiquitination. E3 ubiquitin-protein ligase which is a component of the N-end rule pathway. Recognizes and binds to proteins bearing specific N-terminal residues (N-degrons) that are destabilizing according to the N-end rule, leading to their ubiquitination and subsequent degradation. Recognizes both type-1 and type-2 N-degrons, containing positively charged amino acids (Arg, Lys and His) and bulky and hydrophobic amino acids, respectively. Does not ubiquitinate proteins that are acetylated at the N-terminus. In contrast, it strongly binds methylated N-degrons. Plays a critical role in chromatin inactivation and chromosome-wide transcriptional silencing during meiosis via ubiquitination of histone H2A. Binds leucine and is a negative regulator of the leucine-mTOR signaling pathway, thereby controlling cell growth. Required for spermatogenesis, promotes, with Tex19.1, SPO11-dependent recombination foci to accumulate and drive robust homologous chromosome synapsis. Polyubiquitinates LINE-1 retrotransposon encoded, LIRE1, which induces degradation, inhibiting LINE-1 retrotransposon mobilization. Catalyzes ubiquitination and degradation of the N-terminal part of NLRP1B following NLRP1B activation by pathogens and other damage-associated signals: ubiquitination promotes degradation of the N-terminal part and subsequent release of the cleaved C-terminal part of NLRP1B, which polymerizes and forms the NLRP1B inflammasome followed by host cell pyroptosis. Plays a role in T-cell receptor signaling by inducing 'Lys-63'-linked ubiquitination of lymphocyte cell-specific kinase LCK. This activity is regulated by DUSP22, which induces 'Lys-48'-linked ubiquitination of UBR2, leading to its proteasomal degradation by SCF E3 ubiquitin-protein ligase complex. This Mus musculus (Mouse) protein is E3 ubiquitin-protein ligase UBR2.